The sequence spans 101 residues: UPF0213 protein VC0395_0675/VC395_A0575 (101 aa).

Residues 9–85 form the GIY-YIG domain; the sequence is SPWFVYLVRC…KALSKSQKEA (77 aa).

The protein belongs to the UPF0213 family.

The polypeptide is UPF0213 protein VC0395_0675/VC395_A0575 (Vibrio cholerae serotype O1 (strain ATCC 39541 / Classical Ogawa 395 / O395)).